A 199-amino-acid chain; its full sequence is Probable GTP-binding protein EngB (199 aa).

Positions 22 to 196 (NFSEVAFLGR…EDVIINQTLG (175 aa)) constitute an EngB-type G domain. GTP-binding positions include 30–37 (GRSNVGKS), 57–61 (GKTQL), 82–85 (DLPG), 152–155 (TKCD), and 175–177 (VSN). Ser-37 and Thr-59 together coordinate Mg(2+).

This sequence belongs to the TRAFAC class TrmE-Era-EngA-EngB-Septin-like GTPase superfamily. EngB GTPase family. It depends on Mg(2+) as a cofactor.

In terms of biological role, necessary for normal cell division and for the maintenance of normal septation. The sequence is that of Probable GTP-binding protein EngB from Campylobacter jejuni subsp. doylei (strain ATCC BAA-1458 / RM4099 / 269.97).